The chain runs to 165 residues: Large ribosomal subunit protein uL10 (165 aa).

This sequence belongs to the universal ribosomal protein uL10 family. In terms of assembly, part of the ribosomal stalk of the 50S ribosomal subunit. The N-terminus interacts with L11 and the large rRNA to form the base of the stalk. The C-terminus forms an elongated spine to which L12 dimers bind in a sequential fashion forming a multimeric L10(L12)X complex.

Functionally, forms part of the ribosomal stalk, playing a central role in the interaction of the ribosome with GTP-bound translation factors. In Yersinia pseudotuberculosis serotype IB (strain PB1/+), this protein is Large ribosomal subunit protein uL10.